Reading from the N-terminus, the 497-residue chain is 3-octaprenyl-4-hydroxybenzoate carboxy-lyase (497 aa).

Asn-175 contacts Mn(2+). Prenylated FMN-binding positions include 178–180, 192–194, and 197–198; these read IYR, RWL, and RG. Mn(2+) is bound at residue Glu-241. Catalysis depends on Asp-290, which acts as the Proton donor.

It belongs to the UbiD family. As to quaternary structure, homohexamer. Prenylated FMN serves as cofactor. Mn(2+) is required as a cofactor.

The protein localises to the cell membrane. It catalyses the reaction a 4-hydroxy-3-(all-trans-polyprenyl)benzoate + H(+) = a 2-(all-trans-polyprenyl)phenol + CO2. Its pathway is cofactor biosynthesis; ubiquinone biosynthesis. In terms of biological role, catalyzes the decarboxylation of 3-octaprenyl-4-hydroxy benzoate to 2-octaprenylphenol, an intermediate step in ubiquinone biosynthesis. In Shigella dysenteriae serotype 1 (strain Sd197), this protein is 3-octaprenyl-4-hydroxybenzoate carboxy-lyase.